A 102-amino-acid chain; its full sequence is A-type ATP synthase subunit F (102 aa).

It belongs to the V-ATPase F subunit family. Has multiple subunits with at least A(3), B(3), C, D, E, F, H, I and proteolipid K(x).

It is found in the cell membrane. Component of the A-type ATP synthase that produces ATP from ADP in the presence of a proton gradient across the membrane. In Thermococcus sibiricus (strain DSM 12597 / MM 739), this protein is A-type ATP synthase subunit F.